The following is a 122-amino-acid chain: Ribonuclease P protein component (122 aa).

This sequence belongs to the RnpA family. Consists of a catalytic RNA component (M1 or rnpB) and a protein subunit.

It catalyses the reaction Endonucleolytic cleavage of RNA, removing 5'-extranucleotides from tRNA precursor.. RNaseP catalyzes the removal of the 5'-leader sequence from pre-tRNA to produce the mature 5'-terminus. It can also cleave other RNA substrates such as 4.5S RNA. The protein component plays an auxiliary but essential role in vivo by binding to the 5'-leader sequence and broadening the substrate specificity of the ribozyme. This is Ribonuclease P protein component from Lactobacillus helveticus (strain DPC 4571).